We begin with the raw amino-acid sequence, 201 residues long: Thylakoid membrane protein slr1796 (201 aa).

The chain crosses the membrane as a helical span at residues 16 to 36; that stretch reads FLIVSLAFAMLLLGIWGTLPF.

The protein localises to the cellular thylakoid membrane. In Synechocystis sp. (strain ATCC 27184 / PCC 6803 / Kazusa), this protein is Thylakoid membrane protein slr1796.